The primary structure comprises 434 residues: Glutamate-1-semialdehyde 2,1-aminomutase (434 aa).

N6-(pyridoxal phosphate)lysine is present on Lys-274.

The protein belongs to the class-III pyridoxal-phosphate-dependent aminotransferase family. HemL subfamily. As to quaternary structure, homodimer. It depends on pyridoxal 5'-phosphate as a cofactor.

It is found in the cytoplasm. The enzyme catalyses (S)-4-amino-5-oxopentanoate = 5-aminolevulinate. It functions in the pathway porphyrin-containing compound metabolism; protoporphyrin-IX biosynthesis; 5-aminolevulinate from L-glutamyl-tRNA(Glu): step 2/2. The chain is Glutamate-1-semialdehyde 2,1-aminomutase from Acidovorax sp. (strain JS42).